The sequence spans 518 residues: Membrane-bound lytic murein transglycosylase F (518 aa).

The signal sequence occupies residues 1 to 21 (MKKLKINYLFIGILALLLAVA). A non-LT domain region spans residues 22–269 (LWPSIPWFGK…RIEEKYLGHG (248 aa)). The segment at 270–518 (DDFDYVDTRT…SRKGSEEKQN (249 aa)) is LT domain. Residue Glu314 is part of the active site.

In the N-terminal section; belongs to the bacterial solute-binding protein 3 family. It in the C-terminal section; belongs to the transglycosylase Slt family.

It localises to the cell outer membrane. It catalyses the reaction Exolytic cleavage of the (1-&gt;4)-beta-glycosidic linkage between N-acetylmuramic acid (MurNAc) and N-acetylglucosamine (GlcNAc) residues in peptidoglycan, from either the reducing or the non-reducing ends of the peptidoglycan chains, with concomitant formation of a 1,6-anhydrobond in the MurNAc residue.. Its function is as follows. Murein-degrading enzyme that degrades murein glycan strands and insoluble, high-molecular weight murein sacculi, with the concomitant formation of a 1,6-anhydromuramoyl product. Lytic transglycosylases (LTs) play an integral role in the metabolism of the peptidoglycan (PG) sacculus. Their lytic action creates space within the PG sacculus to allow for its expansion as well as for the insertion of various structures such as secretion systems and flagella. The chain is Membrane-bound lytic murein transglycosylase F from Shigella sonnei (strain Ss046).